A 173-amino-acid chain; its full sequence is Large ribosomal subunit protein uL10 (173 aa).

It belongs to the universal ribosomal protein uL10 family. As to quaternary structure, part of the ribosomal stalk of the 50S ribosomal subunit. The N-terminus interacts with L11 and the large rRNA to form the base of the stalk. The C-terminus forms an elongated spine to which L12 dimers bind in a sequential fashion forming a multimeric L10(L12)X complex.

Its function is as follows. Forms part of the ribosomal stalk, playing a central role in the interaction of the ribosome with GTP-bound translation factors. This Synechocystis sp. (strain ATCC 27184 / PCC 6803 / Kazusa) protein is Large ribosomal subunit protein uL10 (rplJ).